The chain runs to 576 residues: (+)-alpha-terpineol synthase (576 aa).

Residues arginine 286, aspartate 323, aspartate 327, arginine 466, and asparagine 469 each coordinate (2E)-geranyl diphosphate. The Mg(2+) site is built by aspartate 323 and aspartate 327. A DDXXD motif motif is present at residues 323–327; that stretch reads DDVYD. 3 residues coordinate Mg(2+): asparagine 469, threonine 473, and glutamate 477.

Belongs to the terpene synthase family. Tpsb subfamily. Requires Mg(2+) as cofactor. It depends on Mn(2+) as a cofactor.

The catalysed reaction is (2E)-geranyl diphosphate + H2O = (R)-alpha-terpineol + diphosphate. Monoterpene synthase producing mainly (+)-alpha-terpineol (44%) and (-)-limonene (33.6%) and lower amounts of (E)-geraniol (5.9%), linalool (5.0%), myrcene (3.4%), (-)-alpha-pinene (3.3%), (+)-sabinene (3.0%) and alpha-terpinolene (1.6%). The protein is (+)-alpha-terpineol synthase of Santalum album (White sandalwood).